The following is an 83-amino-acid chain: Molybdopterin synthase sulfur carrier subunit (83 aa).

It belongs to the MoaD family.

Its pathway is cofactor biosynthesis; molybdopterin biosynthesis. In terms of biological role, involved in sulfur transfer in the conversion of molybdopterin precursor Z to molybdopterin. Probably plays a role in host phagosome maturation arrest. In Mycobacterium tuberculosis (strain ATCC 25618 / H37Rv), this protein is Molybdopterin synthase sulfur carrier subunit (moaD1).